Consider the following 309-residue polypeptide: Probable manganese-dependent inorganic pyrophosphatase (309 aa).

Residues H9, D13, D15, D75, H97, and D149 each coordinate Mn(2+).

The protein belongs to the PPase class C family. Requires Mn(2+) as cofactor.

It is found in the cytoplasm. It carries out the reaction diphosphate + H2O = 2 phosphate + H(+). The chain is Probable manganese-dependent inorganic pyrophosphatase from Bacillus cereus (strain 03BB102).